A 448-amino-acid chain; its full sequence is Probable D-serine dehydratase (448 aa).

Lys-119 is subject to N6-(pyridoxal phosphate)lysine.

Belongs to the serine/threonine dehydratase family. DsdA subfamily. It depends on pyridoxal 5'-phosphate as a cofactor.

The catalysed reaction is D-serine = pyruvate + NH4(+). This Pseudomonas aeruginosa (strain ATCC 15692 / DSM 22644 / CIP 104116 / JCM 14847 / LMG 12228 / 1C / PRS 101 / PAO1) protein is Probable D-serine dehydratase.